We begin with the raw amino-acid sequence, 42 residues long: Envelope protein P10 (42 aa).

Residues 20–40 (TTAAKIAVVYALVGLVGGLLL) form a helical membrane-spanning segment.

The protein localises to the virion membrane. Its function is as follows. Involved in cell lysis. This chain is Envelope protein P10 (P10), found in Pseudomonas savastanoi pv. phaseolicola (Pseudomonas syringae pv. phaseolicola).